The following is a 462-amino-acid chain: Glycine--tRNA ligase (462 aa).

Substrate-binding residues include R100 and E174. ATP is bound by residues 206-208 (RNE), 216-221 (FRTREF), 290-291 (EL), and 334-337 (GADR). Substrate is bound at residue 221–225 (FEQME). 330 to 334 (EPSLG) lines the substrate pocket.

Belongs to the class-II aminoacyl-tRNA synthetase family. In terms of assembly, homodimer.

The protein resides in the cytoplasm. It catalyses the reaction tRNA(Gly) + glycine + ATP = glycyl-tRNA(Gly) + AMP + diphosphate. In terms of biological role, catalyzes the attachment of glycine to tRNA(Gly). This chain is Glycine--tRNA ligase, found in Acetivibrio thermocellus (strain ATCC 27405 / DSM 1237 / JCM 9322 / NBRC 103400 / NCIMB 10682 / NRRL B-4536 / VPI 7372) (Clostridium thermocellum).